Consider the following 50-residue polypeptide: Insulin (50 aa).

3 disulfides stabilise this stretch: Cys7–Cys36, Cys19–Cys49, and Cys35–Cys40.

The protein belongs to the insulin family. In terms of assembly, heterodimer of a B chain and an A chain linked by two disulfide bonds.

The protein resides in the secreted. Functionally, insulin decreases blood glucose concentration. It increases cell permeability to monosaccharides, amino acids and fatty acids. It accelerates glycolysis, the pentose phosphate cycle, and glycogen synthesis in liver. This Myoxocephalus scorpius (Shorthorn sculpin) protein is Insulin (ins).